A 573-amino-acid chain; its full sequence is Arginine--tRNA ligase (573 aa).

Positions 122-132 (PNLAKEMHVGH) match the 'HIGH' region motif.

The protein belongs to the class-I aminoacyl-tRNA synthetase family. In terms of assembly, monomer.

The protein localises to the cytoplasm. It catalyses the reaction tRNA(Arg) + L-arginine + ATP = L-arginyl-tRNA(Arg) + AMP + diphosphate. This chain is Arginine--tRNA ligase, found in Laribacter hongkongensis (strain HLHK9).